The sequence spans 485 residues: NADH-quinone oxidoreductase subunit N (485 aa).

The next 14 membrane-spanning stretches (helical) occupy residues 8–28 (LIAL…MLSI), 35–55 (FLNA…LWFV), 71–91 (GFAM…CTFA), 105–125 (FYLL…ANHL), 127–147 (SLFL…GYAF), 159–179 (YTIL…LVYA), 203–223 (LLAG…LVPF), 235–255 (PAPV…GVVM), 271–291 (VVLA…ALSQ), 297–317 (LLGY…IALQ), 326–346 (VGVY…VVSL), 373–393 (AAVM…LGFI), 408–430 (WWLV…RVAV), and 455–475 (IVVL…QPLI).

It belongs to the complex I subunit 2 family. NDH-1 is composed of 13 different subunits. Subunits NuoA, H, J, K, L, M, N constitute the membrane sector of the complex.

Its subcellular location is the cell inner membrane. The enzyme catalyses a quinone + NADH + 5 H(+)(in) = a quinol + NAD(+) + 4 H(+)(out). Its function is as follows. NDH-1 shuttles electrons from NADH, via FMN and iron-sulfur (Fe-S) centers, to quinones in the respiratory chain. The immediate electron acceptor for the enzyme in this species is believed to be ubiquinone. Couples the redox reaction to proton translocation (for every two electrons transferred, four hydrogen ions are translocated across the cytoplasmic membrane), and thus conserves the redox energy in a proton gradient. This chain is NADH-quinone oxidoreductase subunit N, found in Escherichia coli O6:K15:H31 (strain 536 / UPEC).